Here is a 128-residue protein sequence, read N- to C-terminus: Azurin (128 aa).

Residues 1–128 (AECKVDVDST…SMMKGAVVLK (128 aa)) enclose the Plastocyanin-like domain. Cysteines 3 and 26 form a disulfide. Positions 46, 112, 117, and 121 each coordinate Cu cation.

The protein localises to the periplasm. Functionally, transfers electrons from cytochrome c551 to cytochrome oxidase. The protein is Azurin of Pseudomonas chlororaphis (Pseudomonas aureofaciens).